Here is a 223-residue protein sequence, read N- to C-terminus: Urease accessory protein UreF (223 aa).

The protein belongs to the UreF family. In terms of assembly, ureD, UreF and UreG form a complex that acts as a GTP-hydrolysis-dependent molecular chaperone, activating the urease apoprotein by helping to assemble the nickel containing metallocenter of UreC. The UreE protein probably delivers the nickel.

Its subcellular location is the cytoplasm. Its function is as follows. Required for maturation of urease via the functional incorporation of the urease nickel metallocenter. The chain is Urease accessory protein UreF from Rhizobium etli (strain CIAT 652).